Consider the following 230-residue polypeptide: Ribonuclease HII (230 aa).

The 192-residue stretch at 21-212 (GPVAGVDEVG…VRRVANGSGG (192 aa)) folds into the RNase H type-2 domain. The a divalent metal cation site is built by D27, E28, and D121.

It belongs to the RNase HII family. It depends on Mn(2+) as a cofactor. The cofactor is Mg(2+).

The protein resides in the cytoplasm. It carries out the reaction Endonucleolytic cleavage to 5'-phosphomonoester.. Functionally, endonuclease that specifically degrades the RNA of RNA-DNA hybrids. The chain is Ribonuclease HII from Mycobacterium avium (strain 104).